The sequence spans 206 residues: Small ribosomal subunit protein uS4 (206 aa).

The S4 RNA-binding domain occupies arginine 98–lysine 158.

This sequence belongs to the universal ribosomal protein uS4 family. As to quaternary structure, part of the 30S ribosomal subunit. Contacts protein S5. The interaction surface between S4 and S5 is involved in control of translational fidelity.

Functionally, one of the primary rRNA binding proteins, it binds directly to 16S rRNA where it nucleates assembly of the body of the 30S subunit. In terms of biological role, with S5 and S12 plays an important role in translational accuracy. The protein is Small ribosomal subunit protein uS4 of Thermoanaerobacter pseudethanolicus (strain ATCC 33223 / 39E) (Clostridium thermohydrosulfuricum).